The chain runs to 277 residues: Phosphatidylglycerol--prolipoprotein diacylglyceryl transferase (277 aa).

4 helical membrane passes run 18-38 (ISVK…LLLA), 51-71 (IIVD…RIYY), 89-109 (IWHG…TAVI), and 116-136 (ISFW…QAIG). An a 1,2-diacyl-sn-glycero-3-phospho-(1'-sn-glycerol)-binding site is contributed by Arg137. 3 consecutive transmembrane segments (helical) span residues 177 to 197 (QPTF…LLII), 205 to 225 (GELF…IEGM), and 235 to 255 (FRVS…LIIY).

It belongs to the Lgt family.

It localises to the cell membrane. It carries out the reaction L-cysteinyl-[prolipoprotein] + a 1,2-diacyl-sn-glycero-3-phospho-(1'-sn-glycerol) = an S-1,2-diacyl-sn-glyceryl-L-cysteinyl-[prolipoprotein] + sn-glycerol 1-phosphate + H(+). It participates in protein modification; lipoprotein biosynthesis (diacylglyceryl transfer). In terms of biological role, catalyzes the transfer of the diacylglyceryl group from phosphatidylglycerol to the sulfhydryl group of the N-terminal cysteine of a prolipoprotein, the first step in the formation of mature lipoproteins. The chain is Phosphatidylglycerol--prolipoprotein diacylglyceryl transferase from Listeria innocua serovar 6a (strain ATCC BAA-680 / CLIP 11262).